The sequence spans 166 residues: Co-chaperone protein HscB homolog (166 aa).

The J domain occupies Gln-3–Thr-75.

The protein belongs to the HscB family. As to quaternary structure, interacts with HscA and stimulates its ATPase activity.

Co-chaperone involved in the maturation of iron-sulfur cluster-containing proteins. Seems to help targeting proteins to be folded toward HscA. This Neisseria meningitidis serogroup C (strain 053442) protein is Co-chaperone protein HscB homolog.